The primary structure comprises 32 residues: Natriuretic peptide Coa_NP1 (32 aa).

Cysteines 8 and 24 form a disulfide.

It belongs to the natriuretic peptide family. Snake NP subfamily. In terms of tissue distribution, expressed by the venom gland.

The protein localises to the secreted. In terms of biological role, snake venom natriuretic peptide that exhibits hypotensive and vasodepressor activity in rats. The chain is Natriuretic peptide Coa_NP1 from Crotalus lutosus abyssus (Grand Canyon rattlesnake).